Here is a 262-residue protein sequence, read N- to C-terminus: Large ribosomal subunit protein uL5c (262 aa).

The N-terminal 39 residues, 1 to 39 (MASPSLLQSSASSFHGRFSPLAAPSSARMLSPPLRNVVK), are a transit peptide targeting the chloroplast.

The protein belongs to the universal ribosomal protein uL5 family. Part of the 50S ribosomal subunit; contacts the 5S rRNA.

The protein localises to the plastid. It localises to the chloroplast. Binds 5S rRNA, forms part of the central protuberance of the 50S subunit. The chain is Large ribosomal subunit protein uL5c (RPL5) from Arabidopsis thaliana (Mouse-ear cress).